Here is a 199-residue protein sequence, read N- to C-terminus: NAD(P)H dehydrogenase (quinone) (199 aa).

Positions valine 4–valine 190 constitute a Flavodoxin-like domain. FMN is bound by residues serine 10–methionine 15 and threonine 78–tyrosine 80. An NAD(+)-binding site is contributed by tyrosine 12. Position 98 (tryptophan 98) interacts with substrate. FMN is bound by residues serine 113–glycine 119 and histidine 134. The segment at glycine 157–phenylalanine 185 is disordered. Over residues methionine 163–glutamate 177 the composition is skewed to polar residues.

It belongs to the WrbA family. Requires FMN as cofactor.

The catalysed reaction is a quinone + NADH + H(+) = a quinol + NAD(+). The enzyme catalyses a quinone + NADPH + H(+) = a quinol + NADP(+). The polypeptide is NAD(P)H dehydrogenase (quinone) (Brucella anthropi (strain ATCC 49188 / DSM 6882 / CCUG 24695 / JCM 21032 / LMG 3331 / NBRC 15819 / NCTC 12168 / Alc 37) (Ochrobactrum anthropi)).